The following is a 95-amino-acid chain: Antitoxin TacA1 (95 aa).

Residues 59-95 (FNFNDEQYEEFINLLDAPVADDPVIEKLLARKPQWDV) form a neutralization domain region.

This sequence belongs to the TacA antitoxin family. As to quaternary structure, homodimer. Forms a complex with cognate toxin TacT1. Forms a 4:2 antitoxin:toxin complex with cognate toxin TacT1.

Antitoxin component of a type II toxin-antitoxin (TA) system. Counteracts the toxic effect of cognate toxin TacT1 (T8), but not TacT2 or TacT3. Plays a role in persister cell formation. Its function is as follows. The TacA1-TacT1 complex binds (and probably represses) its own promoter DNA but not that of tacA3-tacT3, it does not repress the tacA3-tacT3 promoter. The sequence is that of Antitoxin TacA1 from Salmonella typhimurium (strain 14028s / SGSC 2262).